The sequence spans 64 residues: Putative antitoxin VapB1 (64 aa).

In terms of biological role, possibly the antitoxin component of a type II toxin-antitoxin (TA) system. Its cognate toxin is VapC1 (Potential). The protein is Putative antitoxin VapB1 (vapB1) of Methanocaldococcus jannaschii (strain ATCC 43067 / DSM 2661 / JAL-1 / JCM 10045 / NBRC 100440) (Methanococcus jannaschii).